The following is a 66-amino-acid chain: Large ribosomal subunit protein bL35 (66 aa).

This sequence belongs to the bacterial ribosomal protein bL35 family.

This Wigglesworthia glossinidia brevipalpis protein is Large ribosomal subunit protein bL35.